We begin with the raw amino-acid sequence, 181 residues long: NAD(P)H-quinone oxidoreductase subunit 6, chloroplastic (181 aa).

5 consecutive transmembrane segments (helical) span residues 13–33 (PILY…VFFG), 35–55 (IIYS…LYLL), 64–84 (AQIL…IMLI), 98–118 (FGDI…IIMI), and 152–172 (LLPF…AITI).

The protein belongs to the complex I subunit 6 family. NDH is composed of at least 16 different subunits, 5 of which are encoded in the nucleus.

The protein localises to the plastid. Its subcellular location is the chloroplast thylakoid membrane. It catalyses the reaction a plastoquinone + NADH + (n+1) H(+)(in) = a plastoquinol + NAD(+) + n H(+)(out). It carries out the reaction a plastoquinone + NADPH + (n+1) H(+)(in) = a plastoquinol + NADP(+) + n H(+)(out). NDH shuttles electrons from NAD(P)H:plastoquinone, via FMN and iron-sulfur (Fe-S) centers, to quinones in the photosynthetic chain and possibly in a chloroplast respiratory chain. The immediate electron acceptor for the enzyme in this species is believed to be plastoquinone. Couples the redox reaction to proton translocation, and thus conserves the redox energy in a proton gradient. The chain is NAD(P)H-quinone oxidoreductase subunit 6, chloroplastic (ndhG) from Staurastrum punctulatum (Green alga).